Here is a 241-residue protein sequence, read N- to C-terminus: DnaA regulatory inactivator Hda (241 aa).

Belongs to the DnaA family. HdA subfamily. The active form seems to be an ADP-bound monomer. Forms the RIDA complex (regulatory inactivation of DnaA) of ATP-DnaA, ADP-Hda and the DNA-loaded beta sliding clamp (dnaN).

Mediates the interaction of DNA replication initiator protein DnaA with DNA polymerase subunit beta sliding clamp (dnaN). Stimulates hydrolysis of ATP-DnaA to ADP-DnaA, rendering DnaA inactive for reinitiation, a process called regulatory inhibition of DnaA or RIDA. The polypeptide is DnaA regulatory inactivator Hda (Salmonella agona (strain SL483)).